A 111-amino-acid polypeptide reads, in one-letter code: Ribonuclease P protein component (111 aa).

It belongs to the RnpA family. As to quaternary structure, consists of a catalytic RNA component (M1 or rnpB) and a protein subunit.

It catalyses the reaction Endonucleolytic cleavage of RNA, removing 5'-extranucleotides from tRNA precursor.. Functionally, RNaseP catalyzes the removal of the 5'-leader sequence from pre-tRNA to produce the mature 5'-terminus. It can also cleave other RNA substrates such as 4.5S RNA. The protein component plays an auxiliary but essential role in vivo by binding to the 5'-leader sequence and broadening the substrate specificity of the ribozyme. The sequence is that of Ribonuclease P protein component from Mycoplasmopsis pulmonis (strain UAB CTIP) (Mycoplasma pulmonis).